Reading from the N-terminus, the 196-residue chain is Mpv17-like protein (196 aa).

Topologically, residues methionine 1 to proline 16 are cytoplasmic. The tract at residues proline 16–valine 55 is targeting to peroxisomes. The helical transmembrane segment at tryptophan 17–leucine 34 threads the bilayer. The Lumenal segment spans residues glutamine 35–arginine 50. Residues valine 51–leucine 67 traverse the membrane as a helical segment. Residues arginine 68–glutamine 90 lie on the Cytoplasmic side of the membrane. A helical membrane pass occupies residues valine 91–leucine 108. The Lumenal segment spans residues glutamine 109–threonine 150. Residues alanine 151–serine 167 traverse the membrane as a helical segment. Topologically, residues glutamine 168–lysine 196 are cytoplasmic.

Belongs to the peroxisomal membrane protein PXMP2/4 family. Isoform 1 is detected in the kidney (at protein level). Isoform 1 and isoform 2 are expressed in the kidney, heart, liver, lung, pancreas and skeletal muscle.

The protein resides in the peroxisome membrane. Participates in reactive oxygen species metabolism by up- or down-regulation of the genes of antioxidant enzymes. Protective against the mitochondrial apoptotic cascade. This Homo sapiens (Human) protein is Mpv17-like protein (MPV17L).